A 464-amino-acid polypeptide reads, in one-letter code: ATP synthase subunit beta (464 aa).

Gly153–Thr160 contacts ATP.

It belongs to the ATPase alpha/beta chains family. In terms of assembly, F-type ATPases have 2 components, CF(1) - the catalytic core - and CF(0) - the membrane proton channel. CF(1) has five subunits: alpha(3), beta(3), gamma(1), delta(1), epsilon(1). CF(0) has three main subunits: a(1), b(2) and c(9-12). The alpha and beta chains form an alternating ring which encloses part of the gamma chain. CF(1) is attached to CF(0) by a central stalk formed by the gamma and epsilon chains, while a peripheral stalk is formed by the delta and b chains.

Its subcellular location is the cell membrane. It carries out the reaction ATP + H2O + 4 H(+)(in) = ADP + phosphate + 5 H(+)(out). In terms of biological role, produces ATP from ADP in the presence of a proton gradient across the membrane. The catalytic sites are hosted primarily by the beta subunits. This is ATP synthase subunit beta from Alkaliphilus metalliredigens (strain QYMF).